A 204-amino-acid polypeptide reads, in one-letter code: Neurensin-2 (204 aa).

2 helical membrane-spanning segments follow: residues 66–86 (LSSG…GYAV) and 122–142 (LCVA…IGWL). The disordered stretch occupies residues 178–204 (SGQSWFSPPASPFGQSSVQTIQPKRDS). The span at 190-204 (FGQSSVQTIQPKRDS) shows a compositional bias: polar residues.

This sequence belongs to the VMP family.

The protein localises to the membrane. Functionally, may play a role in maintenance and/or transport of vesicles. The protein is Neurensin-2 (NRSN2) of Homo sapiens (Human).